We begin with the raw amino-acid sequence, 911 residues long: MEYKDTLLMMKTEFLMRGNLPKREPDMQARWNEMNLYEAVQEKNAGKPTFILHDGPPYANGDIHMGHGLNKVLKDIVVRYKSMNGFRSPYVPGWDTHGLPIETALQKAGVDRKSMSVAEFRELCAKYALEQVDHQREQFKRLGVLGDYDNPYITLQPEFEAAQIRLFGDMANKGYIYKGKKPVYWSPSSESALAEAEIEYQDKRSAAIYVAFQVMDGKNILEPTDHFVIWTTTPWTIPANLGISVSGELTYARIEHEGKGYIVAETLVPEVIEALGWEGATIGRVFDGADFEYIKAKHPLYDRESLVMLGDHVTAEATGVVHTAPGHGEDDFRIGQAYGLDVLCPVDDKGVMTAEAPGFEGLFYEDANKEIGVALEEAGALLKLSFIKHSYPHDWRTKKPVIFRATPQWFASIKDFRAEILDEIKEVQWVPEWGETRLHNMFKDRGDWVISRQRAWGVPLPIFYAEDGTEIVTPETIDHIANLFAAHGSNVWYEREAVDLLPEGFTHPASPNGIFKKETDIMDVWFDSGSSHAGVLATRPELERPADLYLEGSDQYRGWFNSSLSTSVATTGKAPYKAVVSHGFVLDGQGRKMSKSIGNTIAPIQIMQQFGAEILRLWVASVDYQSDVRASMDNFKQVSESYRKIRNTVRFLLGNLDQFDHTTHRVAFKDLPESDRFMRTKLDQLVGKVKAAYDAYDFMAVYQLLHNFCVLDLSSFYLDYTKDILYIEKEDAPARRAVQTVMYDTVVTLLQLMAPVLPHTADEAWEFVPGVETASIFLTDLPEAPEMTEEGLALIAKWNSFLVFRDDVLKALEEARAEKLVGKTLEAKLLLAPNDETKALLATIDHLEQLLQVSQIEFVASAEKSYGTTGITVLKADGEKCERCWTYSTELGQDPAHPTLCPRCTEVVNSL.

Residues 57 to 67 (PYANGDIHMGH) carry the 'HIGH' region motif. Glu-551 serves as a coordination point for L-isoleucyl-5'-AMP. The 'KMSKS' region signature appears at 592 to 596 (KMSKS). Lys-595 contributes to the ATP binding site. Zn(2+) contacts are provided by Cys-881, Cys-884, Cys-901, and Cys-904.

The protein belongs to the class-I aminoacyl-tRNA synthetase family. IleS type 1 subfamily. As to quaternary structure, monomer. The cofactor is Zn(2+).

Its subcellular location is the cytoplasm. It carries out the reaction tRNA(Ile) + L-isoleucine + ATP = L-isoleucyl-tRNA(Ile) + AMP + diphosphate. In terms of biological role, catalyzes the attachment of isoleucine to tRNA(Ile). As IleRS can inadvertently accommodate and process structurally similar amino acids such as valine, to avoid such errors it has two additional distinct tRNA(Ile)-dependent editing activities. One activity is designated as 'pretransfer' editing and involves the hydrolysis of activated Val-AMP. The other activity is designated 'posttransfer' editing and involves deacylation of mischarged Val-tRNA(Ile). In Exiguobacterium sibiricum (strain DSM 17290 / CCUG 55495 / CIP 109462 / JCM 13490 / 255-15), this protein is Isoleucine--tRNA ligase.